Reading from the N-terminus, the 339-residue chain is Methionine import ATP-binding protein MetN 2 (339 aa).

Positions isoleucine 2–valine 241 constitute an ABC transporter domain. ATP is bound at residue glycine 38 to serine 45.

The protein belongs to the ABC transporter superfamily. Methionine importer (TC 3.A.1.24) family. In terms of assembly, the complex is composed of two ATP-binding proteins (MetN), two transmembrane proteins (MetI) and a solute-binding protein (MetQ).

The protein resides in the cell membrane. It carries out the reaction L-methionine(out) + ATP + H2O = L-methionine(in) + ADP + phosphate + H(+). The catalysed reaction is D-methionine(out) + ATP + H2O = D-methionine(in) + ADP + phosphate + H(+). Part of the ABC transporter complex MetNIQ involved in methionine import. Responsible for energy coupling to the transport system. This is Methionine import ATP-binding protein MetN 2 from Bacillus cereus (strain ATCC 10987 / NRS 248).